The sequence spans 527 residues: Coatomer subunit delta (527 aa).

A compositionally biased stretch (basic and acidic residues) spans 166-175 (IDKSKIEKNK). 2 disordered regions span residues 166 to 187 (IDKSKIEKNKPGGFSSMGSMGS) and 217 to 250 (SDVDPINTKPKDRSRSSVTAPPKSSGMKLGKSGK). Low complexity-rich tracts occupy residues 177 to 187 (GGFSSMGSMGS) and 239 to 250 (KSSGMKLGKSGK). The MHD domain occupies 282-527 (TDPFTLTVEE…QLIAQNYQVI (246 aa)).

This sequence belongs to the adaptor complexes medium subunit family. Delta-COP subfamily. In terms of assembly, oligomeric complex that consists of at least the alpha, beta, beta', gamma, delta, epsilon and zeta subunits.

The protein localises to the cytoplasm. It is found in the golgi apparatus membrane. It localises to the cytoplasmic vesicle. Its subcellular location is the COPI-coated vesicle membrane. Its function is as follows. The coatomer is a cytosolic protein complex that binds to dilysine motifs and reversibly associates with Golgi non-clathrin-coated vesicles, which further mediate biosynthetic protein transport from the ER, via the Golgi up to the trans Golgi network. Coatomer complex is required for budding from Golgi membranes, and is essential for the retrograde Golgi-to-ER transport of dilysine-tagged proteins. The sequence is that of Coatomer subunit delta from Arabidopsis thaliana (Mouse-ear cress).